A 509-amino-acid polypeptide reads, in one-letter code: Pyruvate kinase (509 aa).

Ser29 is subject to Phosphoserine. Arg56 is a substrate binding site. Positions 58 and 60 each coordinate K(+). 58–61 is a binding site for ATP; sequence NFSH. Residue Ser63 is modified to Phosphoserine. Residues Asp91 and Thr92 each contribute to the K(+) site. 2 residues coordinate ATP: Arg98 and Lys184. Glu249 is a binding site for Mg(2+). Residues Gly272 and Asp273 each coordinate substrate. Asp273 is a binding site for Mg(2+). The residue at position 281 (Ser281) is a Phosphoserine. Thr305 serves as a coordination point for substrate. Position 412 is a phosphoserine (Ser412).

This sequence belongs to the pyruvate kinase family. As to quaternary structure, homotetramer. The cofactor is Mg(2+). K(+) is required as a cofactor.

The enzyme catalyses pyruvate + ATP = phosphoenolpyruvate + ADP + H(+). It functions in the pathway carbohydrate degradation; glycolysis; pyruvate from D-glyceraldehyde 3-phosphate: step 5/5. This is Pyruvate kinase (pyk1) from Schizosaccharomyces pombe (strain 972 / ATCC 24843) (Fission yeast).